The chain runs to 34 residues: Cytochrome b6-f complex subunit 8 (34 aa).

A helical transmembrane segment spans residues 3 to 23; that stretch reads LLTFGWAALLAVFTFSLAMVV.

The protein belongs to the PetN family. As to quaternary structure, the 4 large subunits of the cytochrome b6-f complex are cytochrome b6, subunit IV (17 kDa polypeptide, PetD), cytochrome f and the Rieske protein, while the 4 small subunits are PetG, PetL, PetM and PetN. The complex functions as a dimer.

Its subcellular location is the cellular thylakoid membrane. In terms of biological role, component of the cytochrome b6-f complex, which mediates electron transfer between photosystem II (PSII) and photosystem I (PSI), cyclic electron flow around PSI, and state transitions. The chain is Cytochrome b6-f complex subunit 8 from Synechococcus elongatus (strain ATCC 33912 / PCC 7942 / FACHB-805) (Anacystis nidulans R2).